A 275-amino-acid polypeptide reads, in one-letter code: Phosphonoacetaldehyde hydrolase (275 aa).

Asp-15 serves as the catalytic Nucleophile. Residues Asp-15 and Ala-17 each coordinate Mg(2+). Residue Lys-56 is the Schiff-base intermediate with substrate of the active site. A Mg(2+)-binding site is contributed by Asp-189.

Belongs to the HAD-like hydrolase superfamily. PhnX family. As to quaternary structure, homodimer. Mg(2+) serves as cofactor.

The catalysed reaction is phosphonoacetaldehyde + H2O = acetaldehyde + phosphate + H(+). In terms of biological role, involved in phosphonate degradation. The protein is Phosphonoacetaldehyde hydrolase of Pseudomonas aeruginosa (strain UCBPP-PA14).